The chain runs to 689 residues: MANKEYPLAKFRNIGIMAHIDAGKTTATERILFYTGKTHKIGETHEGAATMDWMEQEQERGITITSAATTCFWKDHQVNIIDTPGHVDFTVEVERSLRVLDGAVTILDAKSGVEPQTETVWRQADNYKVPRMVFINKMDKLGADFLMSVGTLRERLHANAVPLQLPIGAEDSFSGIIDLVKNDAIIYKDDLGTVMDETEIPEDMKEMAEEYRTMLLEAVAEVDEDIMMKYLEGEEISVEEIKTALRKGVLANKIVPVLCGSAYKNKGVQLLLDAIIEFMPSPLDIEDVKGTEPTTGEEMTRPADAKAPLAALAFKIATDPFIGKLAFTRIYSGTMKSGTYVFNSNKGKRERIGRLVKMHANHREDVEELKAGELGAIVGLKDTTTGDTLCDDADPIILENMEFPEPVIDVSIEPKTKAGQEKMGIALAKLAEEDPTFRTYTNQETGQTIIAGMGELHLEIIVDRLIREFKVECNVGQPQVAYKETIKKHVKAEGKFIRQSGGRGQYGHCWIEMMPTEGEYEFQNAVVGGSIPKEYIPAIDNGIQEASQSGIIAGYPVINFKVKLFDGSYHDVDSSEMAFKIAGSMAFKNAMSKADAVLLEPSMKVEVVVPEEYMGDVIGDINSRRGRIEGMTPRAGAEVIRAFVPLSEMFGYATTLRSKTQGRGNYVMQFDHYEEVPKSIQDKVIGERK.

Residues 9–283 (AKFRNIGIMA…AIIEFMPSPL (275 aa)) form the tr-type G domain. GTP contacts are provided by residues 18–25 (AHIDAGKT), 82–86 (DTPGH), and 136–139 (NKMD).

The protein belongs to the TRAFAC class translation factor GTPase superfamily. Classic translation factor GTPase family. EF-G/EF-2 subfamily.

It localises to the cytoplasm. In terms of biological role, catalyzes the GTP-dependent ribosomal translocation step during translation elongation. During this step, the ribosome changes from the pre-translocational (PRE) to the post-translocational (POST) state as the newly formed A-site-bound peptidyl-tRNA and P-site-bound deacylated tRNA move to the P and E sites, respectively. Catalyzes the coordinated movement of the two tRNA molecules, the mRNA and conformational changes in the ribosome. The sequence is that of Elongation factor G from Clostridium botulinum (strain Okra / Type B1).